A 159-amino-acid chain; its full sequence is Large ribosomal subunit protein uL10 (159 aa).

It belongs to the universal ribosomal protein uL10 family. As to quaternary structure, part of the ribosomal stalk of the 50S ribosomal subunit. The N-terminus interacts with L11 and the large rRNA to form the base of the stalk. The C-terminus forms an elongated spine to which L12 dimers bind in a sequential fashion forming a multimeric L10(L12)X complex.

Forms part of the ribosomal stalk, playing a central role in the interaction of the ribosome with GTP-bound translation factors. This chain is Large ribosomal subunit protein uL10, found in Campylobacter jejuni subsp. jejuni serotype O:6 (strain 81116 / NCTC 11828).